We begin with the raw amino-acid sequence, 551 residues long: Cytochrome P450 monooxygenase virE (551 aa).

A signal peptide spans 1 to 25; sequence MPKPWVVFGLGTLVLFLWRLNKIGR. N392 is a glycosylation site (N-linked (GlcNAc...) asparagine). C439 is a heme binding site.

This sequence belongs to the cytochrome P450 family. The cofactor is heme.

The protein operates within secondary metabolite biosynthesis. In terms of biological role, cytochrome P450 monooxygenase; part of the gene cluster that mediates the biosynthesis of virensols and trichoxide, fungal natural products that contain or are derived from a salicylaldehyde core. The pathway begins with the synthesis of the reduced chain in virensol C by the highly reducing polyketide synthase virA via condensation of one acetate and 8 malonate units. VirA has interesting programming rules since the first 2 ketides are fully reduced, the 3 following ketides undergo beta-dehydration, and the last 3 ketides are only reduced to beta-hydroxys to yield the trihydroxy portion. The production of aldehyde virensol C by virA alone is surprising, since virA does not contain a reductase (R) domain that is typically associated with reductive product release in HRPKS. The cupin-domain enzyme virC is involved in enhancing virA product turnover. The short-chain dehydrogenase virB then oxidizes the C-7 alcohol of virensol C to a ketone, yielding virensol D. Virensol D is further transformed to salicylaldehyde 5-deoxyaurocitrin by the short-chain dehydrogenase virD. VirD catalyzes the dehydrogenation of C-3 to form the beta-ketone aldehyde, which is followed by the generation of the nucleophilic C-2 that is required for the intramolecular aldol condensation between C-2 and C-7, itself followed by dehydration and aromatization which leads to salicylaldehyde 5-deoxyaurocitrin. While the dehydrogenation of virensol D is definitely catalyzed by virD, the aldol condensation and dehydration may be uncatalyzed or assisted by virD. The short chain dehydrogenase virG then converts salicylaldehyde 5-deoxyaurocitrin into virensol B which is further hydroxylated by the cytochrome P450 monooxygenase virE to yield the hydroquinone virensol A. VirI then may oxidize virensol A to form the quinone, while virH performs the epoxidation. Finally, the two remaining short-chain dehydrogenases, virK and virL, are probably responsible for reducing the ketones to the corresponding alcohols to furnish the epoxycyclohexanol structure in trichoxide. This Hypocrea virens (strain Gv29-8 / FGSC 10586) (Gliocladium virens) protein is Cytochrome P450 monooxygenase virE.